The following is a 66-amino-acid chain: UPF0370 protein YpfN (66 aa).

The chain crosses the membrane as a helical span at residues 4–24 (LAKYWWILVIVFLVGVLLNVI). The interval 39 to 66 (KPELPPHRDFNDKWDDDDDWPKKDQPKK) is disordered. Over residues 42 to 51 (LPPHRDFNDK) the composition is skewed to basic and acidic residues.

This sequence belongs to the UPF0370 family.

The protein resides in the cell membrane. The sequence is that of UPF0370 protein YpfN from Escherichia coli O139:H28 (strain E24377A / ETEC).